We begin with the raw amino-acid sequence, 74 residues long: Neuropeptide-like protein 33 (74 aa).

Residues 1 to 21 (MISTSLLLVVLLFAILAIVDA) form the signal peptide. Y72 is subject to Tyrosine amide.

This sequence belongs to the YARP (YGGW-amide related peptide) family. As to expression, expressed in hypoderm.

Its subcellular location is the secreted. In terms of biological role, may have antifungic activity against D.coniospora. In Caenorhabditis elegans, this protein is Neuropeptide-like protein 33 (nlp-33).